The following is a 325-amino-acid chain: Short chain isoprenyl diphosphate synthase (325 aa).

3 residues coordinate isopentenyl diphosphate: lysine 44, arginine 47, and histidine 76. Aspartate 83 and aspartate 87 together coordinate Mg(2+). Position 92 (arginine 92) interacts with an all-trans-polyprenyl diphosphate. Residue arginine 93 coordinates isopentenyl diphosphate. Residues lysine 173, threonine 174, glutamine 211, lysine 228, and lysine 238 each contribute to the an all-trans-polyprenyl diphosphate site.

It belongs to the FPP/GGPP synthase family. In terms of assembly, homodimer. Mg(2+) serves as cofactor.

It is found in the cytoplasm. The chain is Short chain isoprenyl diphosphate synthase (idsA) from Methanothermobacter thermautotrophicus (strain ATCC 29096 / DSM 1053 / JCM 10044 / NBRC 100330 / Delta H) (Methanobacterium thermoautotrophicum).